We begin with the raw amino-acid sequence, 133 residues long: Small ribosomal subunit protein uS19 (133 aa).

It belongs to the universal ribosomal protein uS19 family.

Protein S19 forms a complex with S13 that binds strongly to the 16S ribosomal RNA. This chain is Small ribosomal subunit protein uS19, found in Thermococcus gammatolerans (strain DSM 15229 / JCM 11827 / EJ3).